The primary structure comprises 331 residues: MHFIDEVKIYIKGGNGGNGCISFHREKFIDRGGPDGGDGGFGGSVIFRSNHHINTLVNYRYQQHFTAENGENGKGSNRSGKSGKSLILDVPVGTQIFSQDGDILLYDFTEDEKSFEIIKGGCGGLGNSHFKTSVNQAPRKSTEGEIAEEMWIHLRLKLLSDVGLIGLPNAGKSTFLSVVTAAKPKIADYPFTTLVPNLGVVYIDDEEFVIADIPGLIAGAHQGYGLGDKFLKHIERCNVLIHLIDGASNNVIADYNTVRFELESYSDYLKNKIEIICLNKCDVLVDEEIQKKIKKLQKVTNKVVHPISTYNNQGVNKIVKLALEIIKNQKY.

Positions 1 to 159 constitute an Obg domain; it reads MHFIDEVKIY…MWIHLRLKLL (159 aa). The 168-residue stretch at 160 to 327 folds into the OBG-type G domain; it reads SDVGLIGLPN…IVKLALEIIK (168 aa). GTP is bound by residues 166–173, 191–195, 212–215, 279–282, and 308–310; these read GLPNAGKS, FTTLV, DIPG, NKCD, and STY. The Mg(2+) site is built by S173 and T193.

It belongs to the TRAFAC class OBG-HflX-like GTPase superfamily. OBG GTPase family. In terms of assembly, monomer. Mg(2+) serves as cofactor.

It is found in the cytoplasm. An essential GTPase which binds GTP, GDP and possibly (p)ppGpp with moderate affinity, with high nucleotide exchange rates and a fairly low GTP hydrolysis rate. Plays a role in control of the cell cycle, stress response, ribosome biogenesis and in those bacteria that undergo differentiation, in morphogenesis control. This is GTPase Obg from Rickettsia prowazekii (strain Madrid E).